We begin with the raw amino-acid sequence, 378 residues long: Chaperone protein DnaJ (378 aa).

Positions 5-70 constitute a J domain; sequence DYYEVLGVAK…QKRAAYDQYG (66 aa). Residues 138–216 form a CR-type zinc finger; sequence GYDTQIRVPS…CHGSGKVKET (79 aa). Zn(2+)-binding residues include Cys151, Cys154, Cys168, Cys171, Cys190, Cys193, Cys204, and Cys207. 4 CXXCXGXG motif repeats span residues 151 to 158, 168 to 175, 190 to 197, and 204 to 211; these read CEVCHGSG, CPTCHGQG, CPKCHGTG, and CAHCHGSG.

This sequence belongs to the DnaJ family. In terms of assembly, homodimer. The cofactor is Zn(2+).

It localises to the cytoplasm. In terms of biological role, participates actively in the response to hyperosmotic and heat shock by preventing the aggregation of stress-denatured proteins and by disaggregating proteins, also in an autonomous, DnaK-independent fashion. Unfolded proteins bind initially to DnaJ; upon interaction with the DnaJ-bound protein, DnaK hydrolyzes its bound ATP, resulting in the formation of a stable complex. GrpE releases ADP from DnaK; ATP binding to DnaK triggers the release of the substrate protein, thus completing the reaction cycle. Several rounds of ATP-dependent interactions between DnaJ, DnaK and GrpE are required for fully efficient folding. Also involved, together with DnaK and GrpE, in the DNA replication of plasmids through activation of initiation proteins. This chain is Chaperone protein DnaJ, found in Burkholderia cenocepacia (strain HI2424).